A 54-amino-acid chain; its full sequence is ATP synthase protein 8 (54 aa).

The helical transmembrane segment at 8-28 (WWIINFFIIWTAILLTLVILV) threads the bilayer.

Belongs to the ATPase protein 8 family. In terms of assembly, F-type ATPases have 2 components, CF(1) - the catalytic core - and CF(0) - the membrane proton channel.

Its subcellular location is the mitochondrion membrane. In terms of biological role, mitochondrial membrane ATP synthase (F(1)F(0) ATP synthase or Complex V) produces ATP from ADP in the presence of a proton gradient across the membrane which is generated by electron transport complexes of the respiratory chain. F-type ATPases consist of two structural domains, F(1) - containing the extramembraneous catalytic core and F(0) - containing the membrane proton channel, linked together by a central stalk and a peripheral stalk. During catalysis, ATP synthesis in the catalytic domain of F(1) is coupled via a rotary mechanism of the central stalk subunits to proton translocation. Part of the complex F(0) domain. Minor subunit located with subunit a in the membrane. This Paracentrotus lividus (Common sea urchin) protein is ATP synthase protein 8 (MT-ATP8).